We begin with the raw amino-acid sequence, 362 residues long: Large ribosomal subunit protein uL2m (362 aa).

Residues 1 to 23 (MLSYNRFRGYLIPQIHALKLFRY) constitute a mitochondrion transit peptide. Residues 306–362 (AMNPCDHPHGGGGGKSIGNKPSQSPWGVLAKGGYKTRRGKNVNKLLVRDRPRGKEKR) form a disordered region. Residues 351 to 362 (LVRDRPRGKEKR) are compositionally biased toward basic and acidic residues.

It belongs to the universal ribosomal protein uL2 family. As to quaternary structure, component of the mitochondrial large ribosomal subunit (mt-LSU). Mature yeast 74S mitochondrial ribosomes consist of a small (37S) and a large (54S) subunit. The 37S small subunit contains a 15S ribosomal RNA (15S mt-rRNA) and at least 32 different proteins. The 54S large subunit contains a 21S rRNA (21S mt-rRNA) and at least 45 different proteins. uL2m has a Na/K ligand binding site.

The protein localises to the mitochondrion. Functionally, component of the mitochondrial ribosome (mitoribosome), a dedicated translation machinery responsible for the synthesis of mitochondrial genome-encoded proteins, including at least some of the essential transmembrane subunits of the mitochondrial respiratory chain. The mitoribosomes are attached to the mitochondrial inner membrane and translation products are cotranslationally integrated into the membrane. The sequence is that of Large ribosomal subunit protein uL2m (rml2) from Schizosaccharomyces pombe (strain 972 / ATCC 24843) (Fission yeast).